The following is a 715-amino-acid chain: Protein MTSS 2 (715 aa).

The region spanning 1 to 249 is the IMD domain; that stretch reads METAEKECGA…EQVIKDLKGS (249 aa). A coiled-coil region spans residues 134-156; sequence HEIKKKSSDTLKLQKKARKGKGD. Composition is skewed to low complexity over residues 253 to 274, 284 to 295, and 312 to 330; these read WSYQ…SMCS, SSVSSHDSGFVS, and TSQK…TCQS. Disordered stretches follow at residues 253 to 405, 420 to 485, and 527 to 562; these read WSYQ…EVSP, LEHQ…RNSN, and IRRT…PTVP. T257 bears the Phosphothreonine mark. S261 carries the phosphoserine modification. The span at 331–341 shows a compositional bias: polar residues; that stretch reads VSECSSPTSDW. Positions 360–369 are enriched in basic and acidic residues; sequence DRVEHLRDTE. S404 is subject to Phosphoserine. Residues 429–442 show a composition bias toward low complexity; that stretch reads SLQYSSGYSTQTTT. A compositionally biased stretch (polar residues) spans 443–455; the sequence is PSCSEDTIPSQGS. A phosphoserine mark is found at S542, S564, S575, S587, S597, and S602. Phosphothreonine is present on T606. The interval 661-690 is disordered; the sequence is FPFPTALSATPSEETPTPPPAATSDPPAED. Positions 687–704 constitute a WH2 domain; the sequence is PAEDMLVAIRRGVRLRRT.

It belongs to the MTSS family. Interacts (via IMD domain) with RAC1; this interaction may be important to potentiate PDGF-induced RAC1 activation.

The protein localises to the cytoplasm. It localises to the cell projection. The protein resides in the ruffle. Functionally, involved in plasma membrane dynamics. Potentiated PDGF-mediated formation of membrane ruffles and lamellipodia in fibroblasts, acting via RAC1 activation. May function in actin bundling. The chain is Protein MTSS 2 (Mtss2) from Mus musculus (Mouse).